The sequence spans 747 residues: Catalase-peroxidase 1 (747 aa).

A compositionally biased stretch (basic and acidic residues) spans 1–22 (MTDTSDARPPHSDDKTRSHSES). The tract at residues 1 to 39 (MTDTSDARPPHSDDKTRSHSESENPAIDSPEPKVHAPLT) is disordered. The tryptophyl-tyrosyl-methioninium (Trp-Tyr) (with M-266) cross-link spans 112–240 (WHAAGTYRIF…FGATTMGLIY (129 aa)). Histidine 113 serves as the catalytic Proton acceptor. A cross-link (tryptophyl-tyrosyl-methioninium (Tyr-Met) (with W-112)) is located at residues 240-266 (YVNPEGPEGKPDPLAAAHDIRETFGRM). Histidine 281 provides a ligand contact to heme b.

Belongs to the peroxidase family. Peroxidase/catalase subfamily. Homodimer or homotetramer. Requires heme b as cofactor. Post-translationally, formation of the three residue Trp-Tyr-Met cross-link is important for the catalase, but not the peroxidase activity of the enzyme.

It catalyses the reaction H2O2 + AH2 = A + 2 H2O. It carries out the reaction 2 H2O2 = O2 + 2 H2O. Its function is as follows. Bifunctional enzyme with both catalase and broad-spectrum peroxidase activity. The chain is Catalase-peroxidase 1 from Mycolicibacterium vanbaalenii (strain DSM 7251 / JCM 13017 / BCRC 16820 / KCTC 9966 / NRRL B-24157 / PYR-1) (Mycobacterium vanbaalenii).